A 554-amino-acid chain; its full sequence is Dihydroxy-acid dehydratase (554 aa).

Asp-78 lines the Mg(2+) pocket. A [2Fe-2S] cluster-binding site is contributed by Cys-119. Mg(2+) contacts are provided by Asp-120 and Lys-121. Lys-121 is modified (N6-carboxylysine). Cys-191 is a binding site for [2Fe-2S] cluster. A Mg(2+)-binding site is contributed by Glu-442. Ser-468 serves as the catalytic Proton acceptor.

The protein belongs to the IlvD/Edd family. As to quaternary structure, homodimer. [2Fe-2S] cluster is required as a cofactor. Mg(2+) serves as cofactor.

It carries out the reaction (2R)-2,3-dihydroxy-3-methylbutanoate = 3-methyl-2-oxobutanoate + H2O. The catalysed reaction is (2R,3R)-2,3-dihydroxy-3-methylpentanoate = (S)-3-methyl-2-oxopentanoate + H2O. It functions in the pathway amino-acid biosynthesis; L-isoleucine biosynthesis; L-isoleucine from 2-oxobutanoate: step 3/4. Its pathway is amino-acid biosynthesis; L-valine biosynthesis; L-valine from pyruvate: step 3/4. Functions in the biosynthesis of branched-chain amino acids. Catalyzes the dehydration of (2R,3R)-2,3-dihydroxy-3-methylpentanoate (2,3-dihydroxy-3-methylvalerate) into 2-oxo-3-methylpentanoate (2-oxo-3-methylvalerate) and of (2R)-2,3-dihydroxy-3-methylbutanoate (2,3-dihydroxyisovalerate) into 2-oxo-3-methylbutanoate (2-oxoisovalerate), the penultimate precursor to L-isoleucine and L-valine, respectively. This chain is Dihydroxy-acid dehydratase, found in Thermotoga sp. (strain RQ2).